The primary structure comprises 858 residues: Autoinducer 2 sensor kinase/phosphatase LuxQ (858 aa).

Helical transmembrane passes span 14 to 34 (STLI…GIFV) and 362 to 382 (LFNF…LIQI). The Histidine kinase domain occupies 488 to 710 (KMSHEIRTPI…TFVVTLPVKD (223 aa)). Phosphohistidine; by autocatalysis is present on H491. A Response regulatory domain is found at 735-850 (KVLLVEDNHT…ALHEAFVDFK (116 aa)). At D784 the chain carries 4-aspartylphosphate.

Binds the complex formed by the autoinducer and LuxP.

The protein resides in the cell inner membrane. It catalyses the reaction ATP + protein L-histidine = ADP + protein N-phospho-L-histidine.. At low cell density, in absence of autoinducer has a kinase activity, and autophosphorylates on a histidine residue. The phosphoryl group is then transferred to an aspartate residue in the response regulator domain. The phosphoryl group is transferred to LuxU, and ultimately to LuxO. At high cell density, in the presence of autoinducer, the kinase activity is inactivated, and the response regulator domain has a phosphatase activity. The polypeptide is Autoinducer 2 sensor kinase/phosphatase LuxQ (luxQ) (Vibrio parahaemolyticus serotype O3:K6 (strain RIMD 2210633)).